A 325-amino-acid polypeptide reads, in one-letter code: Polyamine aminopropyltransferase (325 aa).

In terms of domain architecture, PABS spans 11-248; that stretch reads SSMAEDFAVE…TLWAMAMASD (238 aa). Glutamine 44 contacts S-methyl-5'-thioadenosine. Spermidine-binding residues include histidine 75 and aspartate 99. Residues glutamate 119 and 151 to 152 contribute to the S-methyl-5'-thioadenosine site; that span reads DG. Aspartate 169 (proton acceptor) is an active-site residue. Proline 176 serves as a coordination point for S-methyl-5'-thioadenosine.

This sequence belongs to the spermidine/spermine synthase family. In terms of assembly, homodimer or homotetramer.

It is found in the cytoplasm. It catalyses the reaction S-adenosyl 3-(methylsulfanyl)propylamine + putrescine = S-methyl-5'-thioadenosine + spermidine + H(+). Its pathway is amine and polyamine biosynthesis; spermidine biosynthesis; spermidine from putrescine: step 1/1. Its function is as follows. Catalyzes the irreversible transfer of a propylamine group from the amino donor S-adenosylmethioninamine (decarboxy-AdoMet) to putrescine (1,4-diaminobutane) to yield spermidine. This is Polyamine aminopropyltransferase from Nitrosomonas europaea (strain ATCC 19718 / CIP 103999 / KCTC 2705 / NBRC 14298).